The following is a 531-amino-acid chain: Polypyrimidine tract-binding protein 2 (531 aa).

M1 carries the N-acetylmethionine modification. Residues S26 and S27 each carry the phosphoserine modification. RRM domains lie at 59 to 133 (RVLH…YSNH) and 181 to 257 (LRII…FSKL). The residue at position 308 (S308) is a Phosphoserine. RRM domains are found at residues 338–412 (TVLL…LSKH) and 455–529 (ATLH…FSKS).

As to quaternary structure, monomer. Interacts with NOVA1; the interaction is direct. Identified in a mRNP complex, at least composed of DHX9, DDX3X, ELAVL1, HNRNPU, IGF2BP1, ILF3, PABPC1, PCBP2, PTBP2, STAU1, STAU2, SYNCRIP and YBX1. Part of a ternary complex containing KHSRP and HNRPH1. Interacts with NOVA2; the interaction is direct. Mainly expressed in brain although also detected in other tissues like heart and skeletal muscle. Isoform 1 and isoform 2 are specifically expressed in neuronal tissues. Isoform 3 and isoform 4 are expressed in non-neuronal tissues. Isoform 5 and isoform 6 are truncated forms expressed in non-neuronal tissues.

Its subcellular location is the nucleus. Its function is as follows. RNA-binding protein which binds to intronic polypyrimidine tracts and mediates negative regulation of exons splicing. May antagonize in a tissue-specific manner the ability of NOVA1 to activate exon selection. In addition to its function in pre-mRNA splicing, plays also a role in the regulation of translation. Functionally, reduced affinity for RNA. The sequence is that of Polypyrimidine tract-binding protein 2 from Homo sapiens (Human).